A 352-amino-acid chain; its full sequence is Secreted RxLR effector protein 122 (352 aa).

A signal peptide spans 1-21; the sequence is MRGAYYVLIALLVVASSQTSA. Residues 48-65 carry the RxLR-dEER motif; that stretch reads QFLRGSRNVPGDLAHEER. Over residues 280-290 the composition is skewed to low complexity; the sequence is RGGTTGASRGT. The tract at residues 280-352 is disordered; it reads RGGTTGASRG…VEPEGHRSKP (73 aa). Positions 302 to 315 are enriched in polar residues; it reads AASTSKGKSSVFTE.

It belongs to the RxLR effector family.

It localises to the secreted. It is found in the host nucleus. In terms of biological role, secreted effector that acts as an elicitor that induces cell death in host plant cells. The sequence is that of Secreted RxLR effector protein 122 from Plasmopara viticola (Downy mildew of grapevine).